The following is a 358-amino-acid chain: Phospho-N-acetylmuramoyl-pentapeptide-transferase (358 aa).

Helical transmembrane passes span 27–47 (IYAM…VIRV), 73–93 (TMGG…WADL), 97–117 (YIWT…VDDY), 134–154 (MFWQ…KPGF), 170–190 (LWFW…NAVN), 197–217 (GLAI…SYVA), 233–253 (GAGE…GFLW), 261–281 (VFMG…IAVI), 286–306 (ILLV…IFQV), and 335–355 (KIIV…ISTL).

It belongs to the glycosyltransferase 4 family. MraY subfamily. Mg(2+) serves as cofactor.

The protein resides in the cell inner membrane. The catalysed reaction is UDP-N-acetyl-alpha-D-muramoyl-L-alanyl-gamma-D-glutamyl-meso-2,6-diaminopimeloyl-D-alanyl-D-alanine + di-trans,octa-cis-undecaprenyl phosphate = di-trans,octa-cis-undecaprenyl diphospho-N-acetyl-alpha-D-muramoyl-L-alanyl-D-glutamyl-meso-2,6-diaminopimeloyl-D-alanyl-D-alanine + UMP. It functions in the pathway cell wall biogenesis; peptidoglycan biosynthesis. Its function is as follows. Catalyzes the initial step of the lipid cycle reactions in the biosynthesis of the cell wall peptidoglycan: transfers peptidoglycan precursor phospho-MurNAc-pentapeptide from UDP-MurNAc-pentapeptide onto the lipid carrier undecaprenyl phosphate, yielding undecaprenyl-pyrophosphoryl-MurNAc-pentapeptide, known as lipid I. The polypeptide is Phospho-N-acetylmuramoyl-pentapeptide-transferase (Pelobacter propionicus (strain DSM 2379 / NBRC 103807 / OttBd1)).